The chain runs to 205 residues: Outer-membrane lipoprotein carrier protein (205 aa).

The first 22 residues, 1-22 (MKKTTLKFAALTLLGLSNLALA), serve as a signal peptide directing secretion.

Belongs to the LolA family. As to quaternary structure, monomer.

The protein resides in the periplasm. Functionally, participates in the translocation of lipoproteins from the inner membrane to the outer membrane. Only forms a complex with a lipoprotein if the residue after the N-terminal Cys is not an aspartate (The Asp acts as a targeting signal to indicate that the lipoprotein should stay in the inner membrane). This is Outer-membrane lipoprotein carrier protein from Haemophilus influenzae (strain PittEE).